A 208-amino-acid polypeptide reads, in one-letter code: MEPFTMHRGVAAPLLRINIDTDAIIPSREMKRVSRHGLAEGLFAGWRYLAGTDRSPDPLFVLNQPEYTGASILLAGSNFGCGSSREHAVWALKEFGIRAIVAPGFGAIFHNNCVRNGLLPVVLPMATVQALADDCAAAPATRQVTVDLRQLEVVSPAGARYGFTLGSEQRQMLLEGLDPIALTLKLASSIDAFQGADRLRRPWIHFDG.

This sequence belongs to the LeuD family. LeuD type 1 subfamily. As to quaternary structure, heterodimer of LeuC and LeuD.

The enzyme catalyses (2R,3S)-3-isopropylmalate = (2S)-2-isopropylmalate. It participates in amino-acid biosynthesis; L-leucine biosynthesis; L-leucine from 3-methyl-2-oxobutanoate: step 2/4. In terms of biological role, catalyzes the isomerization between 2-isopropylmalate and 3-isopropylmalate, via the formation of 2-isopropylmaleate. The sequence is that of 3-isopropylmalate dehydratase small subunit (leuD) from Cupriavidus necator (Alcaligenes eutrophus).